The following is a 443-amino-acid chain: Exodeoxyribonuclease 7 large subunit (443 aa).

The protein belongs to the XseA family. Heterooligomer composed of large and small subunits.

The protein resides in the cytoplasm. The enzyme catalyses Exonucleolytic cleavage in either 5'- to 3'- or 3'- to 5'-direction to yield nucleoside 5'-phosphates.. In terms of biological role, bidirectionally degrades single-stranded DNA into large acid-insoluble oligonucleotides, which are then degraded further into small acid-soluble oligonucleotides. The sequence is that of Exodeoxyribonuclease 7 large subunit from Vibrio campbellii (strain ATCC BAA-1116).